The sequence spans 698 residues: Quillaic acid 3-O-glycosyltransferase CSL1 (698 aa).

Residues 14-34 (ALLSRLHILFHSALVASVFYY) traverse the membrane as a helical segment. A glycan (N-linked (GlcNAc...) asparagine) is linked at N38. A helical membrane pass occupies residues 42 to 62 (GPAWALMTFAELTLAFIWALT). The UDP-alpha-D-glucose site is built by K99 and E100. The active site involves D129. Residue N317 is glycosylated (N-linked (GlcNAc...) asparagine). Residue S436 is part of the active site. 6 helical membrane passes run 478–498 (WTSG…YAMS), 508–528 (YAYF…GVVL), 546–566 (WLLA…YEVL), 581–601 (IWII…MLNK), 636–656 (MFMV…FGGL), and 669–689 (FAQL…MEEI).

Belongs to the glycosyltransferase 2 family. Plant cellulose synthase-like G subfamily. Mainly expressed in flowers and flower buds and, to a lesser extent, in leaves, stems and roots.

Its subcellular location is the golgi apparatus membrane. It participates in secondary metabolite biosynthesis; terpenoid biosynthesis. Its function is as follows. Component of the oleanane-type triterpene saponins (e.g. saponarioside A and saponarioside B) biosynthetic pathway, leading to the production of natural products with detergent properties used as traditional sources of soap. Glycosyltransferase that mediates the conversion of quillaic acid (QA) to QA-mono via the initiation of the C-3 sugar chain. This Saponaria officinalis (Common soapwort) protein is Quillaic acid 3-O-glycosyltransferase CSL1.